The chain runs to 285 residues: Bifunctional protein FolD (285 aa).

NADP(+)-binding positions include 166–168 and Ile232; that span reads GAS.

Belongs to the tetrahydrofolate dehydrogenase/cyclohydrolase family. In terms of assembly, homodimer.

The enzyme catalyses (6R)-5,10-methylene-5,6,7,8-tetrahydrofolate + NADP(+) = (6R)-5,10-methenyltetrahydrofolate + NADPH. It carries out the reaction (6R)-5,10-methenyltetrahydrofolate + H2O = (6R)-10-formyltetrahydrofolate + H(+). It functions in the pathway one-carbon metabolism; tetrahydrofolate interconversion. In terms of biological role, catalyzes the oxidation of 5,10-methylenetetrahydrofolate to 5,10-methenyltetrahydrofolate and then the hydrolysis of 5,10-methenyltetrahydrofolate to 10-formyltetrahydrofolate. This is Bifunctional protein FolD from Vibrio atlanticus (strain LGP32) (Vibrio splendidus (strain Mel32)).